A 135-amino-acid polypeptide reads, in one-letter code: Probable transporter PD_1892 (135 aa).

Transmembrane regions (helical) follow at residues 4–24 (YWYP…LLLL), 45–65 (AQNI…TVIF), 71–91 (VTVA…GLGT), and 114–134 (IVAT…MGVY).

Belongs to the TsuA/YedE (TC 9.B.102) family.

The protein resides in the cell inner membrane. The protein is Probable transporter PD_1892 of Xylella fastidiosa (strain Temecula1 / ATCC 700964).